We begin with the raw amino-acid sequence, 734 residues long: Photosystem I P700 chlorophyll a apoprotein A2 (734 aa).

8 helical membrane-spanning segments follow: residues 46–69 (IFAS…FHVA), 135–158 (LYTG…LHLQ), 175–199 (LNHH…HVAI), 273–291 (IAHH…GHMY), 330–353 (IHFQ…QHMY), 369–395 (AALY…IFFI), 417–439 (AIIS…LYVH), and 517–535 (FLVH…LILV). [4Fe-4S] cluster contacts are provided by Cys559 and Cys568. Transmembrane regions (helical) follow at residues 575–596 (AFYL…YWHW) and 643–665 (LSVW…MFLI). Residues His654, Met662, and Tyr670 each coordinate chlorophyll a. Trp671 serves as a coordination point for phylloquinone. The chain crosses the membrane as a helical span at residues 707–727 (LVGLAHFSVGYIFTYAAFLIA).

The protein belongs to the PsaA/PsaB family. The PsaA/B heterodimer binds the P700 chlorophyll special pair and subsequent electron acceptors. PSI consists of a core antenna complex that captures photons, and an electron transfer chain that converts photonic excitation into a charge separation. The eukaryotic PSI reaction center is composed of at least 11 subunits. It depends on P700 is a chlorophyll a/chlorophyll a' dimer, A0 is one or more chlorophyll a, A1 is one or both phylloquinones and FX is a shared 4Fe-4S iron-sulfur center. as a cofactor.

It localises to the plastid. It is found in the chloroplast thylakoid membrane. The enzyme catalyses reduced [plastocyanin] + hnu + oxidized [2Fe-2S]-[ferredoxin] = oxidized [plastocyanin] + reduced [2Fe-2S]-[ferredoxin]. Functionally, psaA and PsaB bind P700, the primary electron donor of photosystem I (PSI), as well as the electron acceptors A0, A1 and FX. PSI is a plastocyanin-ferredoxin oxidoreductase, converting photonic excitation into a charge separation, which transfers an electron from the donor P700 chlorophyll pair to the spectroscopically characterized acceptors A0, A1, FX, FA and FB in turn. Oxidized P700 is reduced on the lumenal side of the thylakoid membrane by plastocyanin. This Gossypium hirsutum (Upland cotton) protein is Photosystem I P700 chlorophyll a apoprotein A2.